We begin with the raw amino-acid sequence, 498 residues long: Lysine--tRNA ligase (498 aa).

Positions 411 and 418 each coordinate Mg(2+).

It belongs to the class-II aminoacyl-tRNA synthetase family. Homodimer. The cofactor is Mg(2+).

The protein localises to the cytoplasm. It catalyses the reaction tRNA(Lys) + L-lysine + ATP = L-lysyl-tRNA(Lys) + AMP + diphosphate. The chain is Lysine--tRNA ligase from Enterococcus faecalis (strain ATCC 700802 / V583).